Reading from the N-terminus, the 399-residue chain is Probable protein phosphatase 2C 28 (399 aa).

One can recognise a PPM-type phosphatase domain in the interval 48–356 (EFSMAVVQAN…DDITVIVVFL (309 aa)). Mn(2+) is bound by residues aspartate 87, glycine 88, aspartate 288, and aspartate 347.

The protein belongs to the PP2C family. Mg(2+) serves as cofactor. It depends on Mn(2+) as a cofactor.

The catalysed reaction is O-phospho-L-seryl-[protein] + H2O = L-seryl-[protein] + phosphate. It carries out the reaction O-phospho-L-threonyl-[protein] + H2O = L-threonyl-[protein] + phosphate. This chain is Probable protein phosphatase 2C 28, found in Oryza sativa subsp. japonica (Rice).